Consider the following 579-residue polypeptide: UPF0329 protein ECU06_1620 (579 aa).

Disordered stretches follow at residues 325–360 and 370–389; these read EEKAKGRKDGKKKSVNVSEVKEEESETEEVEAGEEA and ARRKTGKKSRGGRKRYKIHK. The span at 329–338 shows a compositional bias: basic residues; it reads KGRKDGKKKS. Acidic residues predominate over residues 345-360; the sequence is KEEESETEEVEAGEEA.

This sequence belongs to the UPF0329 family.

The protein is UPF0329 protein ECU06_1620 of Encephalitozoon cuniculi (strain GB-M1) (Microsporidian parasite).